Here is a 78-residue protein sequence, read N- to C-terminus: Short neurotoxin OH-46 (78 aa).

The N-terminal stretch at 1 to 21 is a signal peptide; the sequence is MKNLLLTFLVVTIVCLDLGYT. 4 disulfide bridges follow: Cys24-Cys40, Cys33-Cys58, Cys62-Cys70, and Cys71-Cys76.

It belongs to the three-finger toxin family. Short-chain subfamily. In terms of tissue distribution, expressed by the venom gland.

It localises to the secreted. Functionally, this three-finger toxin binds and inhibits the nicotinic acetylcholine receptor (nAChR). The polypeptide is Short neurotoxin OH-46 (Ophiophagus hannah (King cobra)).